The following is a 1018-amino-acid chain: Contactin-1 (1018 aa).

The first 20 residues, 1-20, serve as a signal peptide directing secretion; sequence MKMWLLFSLLVIISFKTCLS. Ig-like C2-type domains follow at residues 41-131, 137-223, 241-326, 331-407, 413-500, and 504-601; these read PIFE…ATLS, PFPP…KSVF, PADI…ARIY, PEWV…AELK, PTFE…GTLV, and PTRI…LVVR. 2 cysteine pairs are disulfide-bonded: Cys-65–Cys-114 and Cys-158–Cys-211. Asn-208 and Asn-258 each carry an N-linked (GlcNAc...) asparagine glycan. The cysteines at positions 263 and 310 are disulfide-linked. A glycan (N-linked (GlcNAc...) asparagine) is linked at Asn-338. Intrachain disulfides connect Cys-352-Cys-391 and Cys-436-Cys-484. N-linked (GlcNAc...) asparagine glycosylation is found at Asn-457, Asn-473, Asn-494, and Asn-521. A disulfide bridge connects residues Cys-526 and Cys-583. An N-linked (GlcNAc...) asparagine glycan is attached at Asn-591. Fibronectin type-III domains lie at 606–704, 709–806, 811–906, and 907–1000; these read PPGG…TDGA, APSD…SAQD, APTA…APPS, and QPPR…ILSP. Disordered regions lie at residues 698–718 and 891–910; these read KIKT…GGGG and PPSD…QPPR. Ser-999 carries GPI-anchor amidated serine lipidation. Residues 1000–1018 constitute a propeptide, removed in mature form; it reads PCLLGFLLPALGILVYLEF.

The protein belongs to the immunoglobulin superfamily. Contactin family. As to quaternary structure, monomer. Interacts with CNTNAP1 in cis form. Binds to the carbonic-anhydrase like domain of PTPRZ1. Interacts with NOTCH1 and TNR. Detected in a complex with NRCAM and PTPRB. Interacts with TASOR.

The protein resides in the cell membrane. Its function is as follows. Contactins mediate cell surface interactions during nervous system development. Involved in the formation of paranodal axo-glial junctions in myelinated peripheral nerves and in the signaling between axons and myelinating glial cells via its association with CNTNAP1. Participates in oligodendrocytes generation by acting as a ligand of NOTCH1. Its association with NOTCH1 promotes NOTCH1 activation through the released notch intracellular domain (NICD) and subsequent translocation to the nucleus. Interaction with TNR induces a repulsion of neurons and an inhibition of neurite outgrowth. The protein is Contactin-1 (CNTN1) of Bos taurus (Bovine).